The sequence spans 85 residues: Colicin-E6 immunity protein (85 aa).

It belongs to the cloacin immunity protein family.

Its function is as follows. This protein inhibits the 16S RNA hydrolyzing activity of colicin E6 by binding with high affinity to the C-terminal catalytic domain of E6. This protein is able to protect a cell, which harbors the plasmid ColE6 against colicin E6. The sequence is that of Colicin-E6 immunity protein (imm) from Escherichia coli.